We begin with the raw amino-acid sequence, 339 residues long: Tetraacyldisaccharide 4'-kinase (339 aa).

Residue 58-65 (TVGGSGKT) coordinates ATP.

This sequence belongs to the LpxK family.

It catalyses the reaction a lipid A disaccharide + ATP = a lipid IVA + ADP + H(+). It participates in glycolipid biosynthesis; lipid IV(A) biosynthesis; lipid IV(A) from (3R)-3-hydroxytetradecanoyl-[acyl-carrier-protein] and UDP-N-acetyl-alpha-D-glucosamine: step 6/6. Transfers the gamma-phosphate of ATP to the 4'-position of a tetraacyldisaccharide 1-phosphate intermediate (termed DS-1-P) to form tetraacyldisaccharide 1,4'-bis-phosphate (lipid IVA). In Shewanella baltica (strain OS155 / ATCC BAA-1091), this protein is Tetraacyldisaccharide 4'-kinase.